Reading from the N-terminus, the 350-residue chain is MLPEWVYHKCPEISAVHRDAAIVRQAQLTKPTGALGRLEQLAIELAGLQATEQPRAARVPIIIFAGDHGIVAQGVSAYPQAVTIAMMANFASGGAAISVLARELGSHLEVVDAGTLSQDEMIGIVTDRPRHGTRDFSVEAALTLAELAFAFEAGERAVARAAASQPDLLIFGEMGIGNTTTSAAIAASLLGVSAEEIAGSGTGVDAAGRAHKARVIDAAIVRHGVAAASPEKILCAVGGLEIAAICGAIIAAAQRRIPVLIDGFIVSVAALAAVRLNPSCQPFLLPSHQSAEQGHRLVLRALNVQPLISLDLRLGEGSGAAIALPLVRSACALHNGMATFAQANVPDRPA.

The active-site Proton acceptor is the E316.

The protein belongs to the CobT family.

The enzyme catalyses 5,6-dimethylbenzimidazole + nicotinate beta-D-ribonucleotide = alpha-ribazole 5'-phosphate + nicotinate + H(+). The protein operates within nucleoside biosynthesis; alpha-ribazole biosynthesis; alpha-ribazole from 5,6-dimethylbenzimidazole: step 1/2. Functionally, catalyzes the synthesis of alpha-ribazole-5'-phosphate from nicotinate mononucleotide (NAMN) and 5,6-dimethylbenzimidazole (DMB). The chain is Nicotinate-nucleotide--dimethylbenzimidazole phosphoribosyltransferase from Bradyrhizobium diazoefficiens (strain JCM 10833 / BCRC 13528 / IAM 13628 / NBRC 14792 / USDA 110).